A 715-amino-acid polypeptide reads, in one-letter code: Protein naked cuticle homolog (715 aa).

The EF-hand domain maps to 18–53; sequence KKPQPLQFSFTLYDLDGHGKITKDDIAGIVSTIYES. The segment at 256-282 is disordered; sequence SRAKRKVVRKSRSSRKASKLTDDFSRP. Residues 257-273 show a composition bias toward basic residues; sequence RAKRKVVRKSRSSRKAS. Residues 305–334 form a required for nuclear localization and inhibition of Wnt signaling region; that stretch reads ECWKSSLCRRELIEIIRDSMVKNSLCFQPN. The disordered stretch occupies residues 639–690; the sequence is ELHQSVQQQQGTHQQQQQPQSSVSSPTHHHHHHAGASLLGENSGSSASAAST. 2 stretches are compositionally biased toward low complexity: residues 642–664 and 673–690; these read QSVQ…VSSP and GASL…AAST.

This sequence belongs to the NKD family.

The protein resides in the cell membrane. It is found in the cytoplasm. Its subcellular location is the nucleus. Its function is as follows. Cell autonomous antagonist of the canonical Wnt signaling pathway. May activate a second Wnt signaling pathway that controls planar cell polarity. Required for neuroblast specification. In Aedes aegypti (Yellowfever mosquito), this protein is Protein naked cuticle homolog.